Here is a 466-residue protein sequence, read N- to C-terminus: Citrate synthase, mitochondrial (466 aa).

Residues 1-27 (MALLTAAARLLGTKNASCLVLAARHAS) constitute a mitochondrion transit peptide. Residues 2-21 (ALLTAAARLLGTKNASCLVL) carry the SIFI-degron motif. The residue at position 57 (lysine 57) is an N6-succinyllysine. At lysine 76 the chain carries N6-acetyllysine; alternate. Lysine 76 carries the N6-succinyllysine; alternate modification. N6-succinyllysine is present on residues lysine 103 and lysine 193. Histidine 301 is a catalytic residue. Residues lysine 321 and lysine 327 each carry the N6-acetyllysine; alternate modification. 2 positions are modified to N6-succinyllysine; alternate: lysine 321 and lysine 327. The active site involves histidine 347. Arginine 356 provides a ligand contact to oxaloacetate. Residue lysine 375 is modified to N6-acetyllysine; alternate. An N6-succinyllysine; alternate modification is found at lysine 375. Lysine 382 carries the N6-acetyllysine modification. Lysine 393 carries the post-translational modification N6-acetyllysine; alternate. At lysine 393 the chain carries N6-succinyllysine; alternate. Lysine 395 is subject to N6,N6,N6-trimethyllysine. Residue aspartate 402 is part of the active site. Oxaloacetate is bound by residues arginine 428 and arginine 448. Residue lysine 450 is modified to N6-succinyllysine. N6-acetyllysine; alternate is present on lysine 459. Lysine 459 is modified (N6-succinyllysine; alternate).

The protein belongs to the citrate synthase family. As to quaternary structure, homodimer. Methylated. Trimethylation at Lys-395 by CSKMT decreases citrate synthase activity. In terms of processing, in response to mitochondrial stress, the precursor protein is ubiquitinated by the SIFI complex in the cytoplasm before mitochondrial import, leading to its degradation. Within the SIFI complex, UBR4 initiates ubiquitin chain that are further elongated or branched by KCMF1.

The protein localises to the mitochondrion matrix. The catalysed reaction is oxaloacetate + acetyl-CoA + H2O = citrate + CoA + H(+). Its pathway is carbohydrate metabolism; tricarboxylic acid cycle; isocitrate from oxaloacetate: step 1/2. In terms of biological role, key enzyme of the Krebs tricarboxylic acid cycle which catalyzes the synthesis of citrate from acetyl coenzyme A and oxaloacetate. This chain is Citrate synthase, mitochondrial (CS), found in Homo sapiens (Human).